Consider the following 146-residue polypeptide: Acidic phospholipase A2 2 (146 aa).

Residues 1 to 21 (MTPAHLLILAAVCVSPLGASS) form the signal peptide. A propeptide spanning residues 22 to 27 (SRPMPL) is cleaved from the precursor. Intrachain disulfides connect Cys38–Cys98, Cys53–Cys145, Cys55–Cys71, Cys70–Cys126, Cys77–Cys119, Cys87–Cys112, and Cys105–Cys117. Ca(2+) is bound by residues Tyr54, Gly56, and Gly58. His74 is an active-site residue. Asp75 provides a ligand contact to Ca(2+). Asp120 is a catalytic residue.

The protein belongs to the phospholipase A2 family. Group I subfamily. D49 sub-subfamily. Ca(2+) serves as cofactor. In terms of tissue distribution, expressed by the venom gland.

The protein localises to the secreted. The catalysed reaction is a 1,2-diacyl-sn-glycero-3-phosphocholine + H2O = a 1-acyl-sn-glycero-3-phosphocholine + a fatty acid + H(+). PLA2 catalyzes the calcium-dependent hydrolysis of the 2-acyl groups in 3-sn-phosphoglycerides. This is Acidic phospholipase A2 2 from Naja atra (Chinese cobra).